The chain runs to 447 residues: MREILHIQGGQCGNQIGSKFWEVVCDEHGIDPTGRYVGTSDLQLERVNVYYNEASCGRFVPRAVLMDLEPGTMDSVRTGPYGQIFRPDNFVFGQSGAGNNWAKGHYTEGAELIDSVLDVVRKEAENCDCLQGFQVCHSLGGGTGSGMGTLLISKIREEYPDRMMLTFSVFPSPKVSDTVVEPYNATLSVHQLVENADECMVLDNEALYDICFRTLKLTTPSFGDLNHLISATMSGVTCCLRFPGQLNSDLRKLAVNLIPFPRLHFFMVGFAPLTSRGSQMYRSLTVPELTQQMWDSKNMMCAADPRHGRYLTASAMFRGKMSTKEVDEQMINVQNKNSSYFVEWIPNNVKSSVCDIAPRGLSMASTFIGNSTSIQEMFRRVSEQFTAMFRRKAFLHWYTGEGMDEMEFTEAESNMNDLVAEYQQYQDATADEEEELYEDEDDADLQE.

Gln11, Glu69, Ser138, Gly142, Thr143, Gly144, Asn204, and Asn226 together coordinate GTP. Glu69 lines the Mg(2+) pocket.

The protein belongs to the tubulin family. In terms of assembly, dimer of alpha and beta chains. A typical microtubule is a hollow water-filled tube with an outer diameter of 25 nm and an inner diameter of 15 nM. Alpha-beta heterodimers associate head-to-tail to form protofilaments running lengthwise along the microtubule wall with the beta-tubulin subunit facing the microtubule plus end conferring a structural polarity. Microtubules usually have 13 protofilaments but different protofilament numbers can be found in some organisms and specialized cells. The cofactor is Mg(2+).

It is found in the cytoplasm. Its subcellular location is the cytoskeleton. Its function is as follows. Tubulin is the major constituent of microtubules, a cylinder consisting of laterally associated linear protofilaments composed of alpha- and beta-tubulin heterodimers. Microtubules grow by the addition of GTP-tubulin dimers to the microtubule end, where a stabilizing cap forms. Below the cap, tubulin dimers are in GDP-bound state, owing to GTPase activity of alpha-tubulin. The sequence is that of Tubulin beta-5 chain (TUBB5) from Triticum aestivum (Wheat).